A 158-amino-acid chain; its full sequence is NAD(P)H-quinone oxidoreductase subunit J, chloroplastic (158 aa).

It belongs to the complex I 30 kDa subunit family. In terms of assembly, NDH is composed of at least 16 different subunits, 5 of which are encoded in the nucleus.

The protein localises to the plastid. It localises to the chloroplast thylakoid membrane. It catalyses the reaction a plastoquinone + NADH + (n+1) H(+)(in) = a plastoquinol + NAD(+) + n H(+)(out). The enzyme catalyses a plastoquinone + NADPH + (n+1) H(+)(in) = a plastoquinol + NADP(+) + n H(+)(out). In terms of biological role, NDH shuttles electrons from NAD(P)H:plastoquinone, via FMN and iron-sulfur (Fe-S) centers, to quinones in the photosynthetic chain and possibly in a chloroplast respiratory chain. The immediate electron acceptor for the enzyme in this species is believed to be plastoquinone. Couples the redox reaction to proton translocation, and thus conserves the redox energy in a proton gradient. The sequence is that of NAD(P)H-quinone oxidoreductase subunit J, chloroplastic from Eucalyptus globulus subsp. globulus (Tasmanian blue gum).